Here is a 323-residue protein sequence, read N- to C-terminus: tRNA U34 carboxymethyltransferase (323 aa).

Carboxy-S-adenosyl-L-methionine contacts are provided by residues lysine 91, tryptophan 105, lysine 110, glycine 130, 152 to 154, 181 to 182, methionine 196, tyrosine 200, and arginine 315; these read DPS and IE.

The protein belongs to the class I-like SAM-binding methyltransferase superfamily. CmoB family. As to quaternary structure, homotetramer.

It carries out the reaction carboxy-S-adenosyl-L-methionine + 5-hydroxyuridine(34) in tRNA = 5-carboxymethoxyuridine(34) in tRNA + S-adenosyl-L-homocysteine + H(+). Catalyzes carboxymethyl transfer from carboxy-S-adenosyl-L-methionine (Cx-SAM) to 5-hydroxyuridine (ho5U) to form 5-carboxymethoxyuridine (cmo5U) at position 34 in tRNAs. The polypeptide is tRNA U34 carboxymethyltransferase (Vibrio vulnificus (strain CMCP6)).